The chain runs to 248 residues: MWLGVVTLFPEMFRAVTDFGVTGRAVSKGLLEMQTWNPRDFTHDKHKTVDDRPYGGGPGMLMMVQPLRDAIHAAKAAAGKEAKVIYLSPQGRKLTQQGVEELAKSSSLVLVCGRYEGVDERIIQTEVDEEWSIGDYVLSGGELPAMTLIDSVSRLVPGVLGKKASAEQDSFSDGLLDCPHYTRPESMDGLDVPAVLLSGNHEHIRRWRLQQSLGRTLLRRPELLENLALTGEQEQLLAEFVDSIKQDA.

S-adenosyl-L-methionine contacts are provided by residues Gly-113 and 133–138 (IGDYVL).

Belongs to the RNA methyltransferase TrmD family. As to quaternary structure, homodimer.

The protein localises to the cytoplasm. It carries out the reaction guanosine(37) in tRNA + S-adenosyl-L-methionine = N(1)-methylguanosine(37) in tRNA + S-adenosyl-L-homocysteine + H(+). Its function is as follows. Specifically methylates guanosine-37 in various tRNAs. The protein is tRNA (guanine-N(1)-)-methyltransferase of Shewanella piezotolerans (strain WP3 / JCM 13877).